The chain runs to 239 residues: Geranylgeranylglyceryl phosphate synthase (239 aa).

Sn-glycerol 1-phosphate is bound at residue Lys13. The Mg(2+) site is built by Asp15 and Thr42. Sn-glycerol 1-phosphate is bound by residues 162 to 167 (YIEYSG), Gly192, and 212 to 213 (GD).

The protein belongs to the GGGP/HepGP synthase family. Group I subfamily. The cofactor is Mg(2+).

It localises to the cytoplasm. It carries out the reaction sn-glycerol 1-phosphate + (2E,6E,10E)-geranylgeranyl diphosphate = sn-3-O-(geranylgeranyl)glycerol 1-phosphate + diphosphate. Its pathway is membrane lipid metabolism; glycerophospholipid metabolism. Prenyltransferase that catalyzes the transfer of the geranylgeranyl moiety of geranylgeranyl diphosphate (GGPP) to the C3 hydroxyl of sn-glycerol-1-phosphate (G1P). This reaction is the first ether-bond-formation step in the biosynthesis of archaeal membrane lipids. This is Geranylgeranylglyceryl phosphate synthase from Haloquadratum walsbyi (strain DSM 16790 / HBSQ001).